The chain runs to 170 residues: Cytochrome b6-f complex subunit 4 (170 aa).

Helical transmembrane passes span 46 to 66, 105 to 125, and 141 to 161; these read LLFM…GLAV, LLGI…PFIE, and TVFL…TLPL.

Belongs to the cytochrome b family. PetD subfamily. The 4 large subunits of the cytochrome b6-f complex are cytochrome b6, subunit IV (17 kDa polypeptide, PetD), cytochrome f and the Rieske protein, while the 4 small subunits are PetG, PetL, PetM and PetN. The complex functions as a dimer.

It is found in the cellular thylakoid membrane. Its function is as follows. Component of the cytochrome b6-f complex, which mediates electron transfer between photosystem II (PSII) and photosystem I (PSI), cyclic electron flow around PSI, and state transitions. In Synechococcus sp. (strain JA-3-3Ab) (Cyanobacteria bacterium Yellowstone A-Prime), this protein is Cytochrome b6-f complex subunit 4.